We begin with the raw amino-acid sequence, 69 residues long: Omega-oxotoxin-Ol1a (69 aa).

The 68-residue stretch at Asp1 to Lys68 folds into the Oxytoxin-type inhibitor cystine knot (ICK) domain. Intrachain disulfides connect Cys4/Cys18, Cys11/Cys23, Cys15/Cys64, Cys17/Cys52, and Cys25/Cys50. The residue at position 69 (Asn69) is an Asparagine amide.

It belongs to the spiderine family. Spiderine subfamily. Expressed by the venom gland.

The protein resides in the secreted. Its function is as follows. Weak blocker of vertebrate P/Q-, N- and L-type voltage-gated calcium channels (Cav1 and Cav2). Is both paralytic and lethal when injected into lepidopteran larvae. Is not toxic to mice. In Oxyopes lineatus (Lynx spider), this protein is Omega-oxotoxin-Ol1a.